A 131-amino-acid polypeptide reads, in one-letter code: Glycine cleavage system H protein (131 aa).

The Lipoyl-binding domain maps to 24 to 106 (TLRVGITDYA…YGEGWLVDLQ (83 aa)). K65 is subject to N6-lipoyllysine.

The protein belongs to the GcvH family. In terms of assembly, the glycine cleavage system is composed of four proteins: P, T, L and H. It depends on (R)-lipoate as a cofactor.

In terms of biological role, the glycine cleavage system catalyzes the degradation of glycine. The H protein shuttles the methylamine group of glycine from the P protein to the T protein. In Mycobacterium sp. (strain JLS), this protein is Glycine cleavage system H protein.